Reading from the N-terminus, the 578-residue chain is Dapdiamide synthesis protein DdaD (578 aa).

The 76-residue stretch at 498 to 573 (ESISATEHQI…KMAAWLDASS (76 aa)) folds into the Carrier domain. Serine 533 bears the O-(pantetheine 4'-phosphoryl)serine mark.

The protein belongs to the ATP-dependent AMP-binding enzyme family. Pantetheine 4'-phosphate is required as a cofactor.

It participates in antibiotic biosynthesis. Its function is as follows. Involved in dapdiamide antibiotics biosynthesis. Activates and sequesters N-beta-fumaramoyl-DAP as a covalently tethered thioester for subsequent oxidative modification of the fumaramoyl group. The sequence is that of Dapdiamide synthesis protein DdaD from Enterobacter agglomerans (Erwinia herbicola).